Consider the following 621-residue polypeptide: Type 2 DNA topoisomerase 6 subunit B (621 aa).

ATP contacts are provided by residues Asn48, Asp80, 101–102 (SR), 111–118 (GQQGIGIS), and Lys435.

Belongs to the TOP6B family. Homodimer. Heterotetramer of two Top6A and two Top6B chains.

The catalysed reaction is ATP-dependent breakage, passage and rejoining of double-stranded DNA.. Its function is as follows. Relaxes both positive and negative superturns and exhibits a strong decatenase activity. In Methanosarcina barkeri (strain Fusaro / DSM 804), this protein is Type 2 DNA topoisomerase 6 subunit B.